A 721-amino-acid polypeptide reads, in one-letter code: Tripartite terminase subunit 1 (721 aa).

A C3H1-type zinc finger spans residues 189-217 (CLKCYEELSLVPNQGKSIRKRLAGKFCNH). 625 to 632 (YNDVFGKQ) is an ATP binding site.

This sequence belongs to the herpesviridae TRM1 protein family. As to quaternary structure, associates with TRM2 and TRM3 to form the tripartite terminase complex. Interacts with portal protein.

It localises to the host nucleus. Component of the molecular motor that translocates viral genomic DNA in empty capsid during DNA packaging. Forms a tripartite terminase complex together with TRM2 and TRM3 in the host cytoplasm. Once the complex reaches the host nucleus, it interacts with the capsid portal vertex. This portal forms a ring in which genomic DNA is translocated into the capsid. TRM1 carries an endonuclease activity that plays an important role for the cleavage of concatemeric viral DNA into unit length genomes. The polypeptide is Tripartite terminase subunit 1 (Homo sapiens (Human)).